The primary structure comprises 183 residues: Ribosome maturation factor RimM (183 aa).

The PRC barrel domain maps to 96–171 (PDEFYDHELE…VALIDPPEGL (76 aa)).

Belongs to the RimM family. Binds ribosomal protein uS19.

The protein resides in the cytoplasm. An accessory protein needed during the final step in the assembly of 30S ribosomal subunit, possibly for assembly of the head region. Essential for efficient processing of 16S rRNA. May be needed both before and after RbfA during the maturation of 16S rRNA. It has affinity for free ribosomal 30S subunits but not for 70S ribosomes. The protein is Ribosome maturation factor RimM of Rhodococcus jostii (strain RHA1).